The sequence spans 608 residues: Cilia- and flagella-associated protein 100 (608 aa).

Residues 1–17 (MSETLSNIVSKNMTNDK) show a composition bias toward polar residues. Positions 1–57 (MSETLSNIVSKNMTNDKNSLESMNISSSSSAEENPKKQAKKXKERGPDPSANPFHLS) are disordered. A compositionally biased stretch (low complexity) spans 20–32 (LESMNISSSSSAE). Coiled coils occupy residues 164 to 196 (TLDCKRREIQRLETLATKEEARLQQAEKSLAKD) and 230 to 257 (LEIRDLTTQIVNIKSEISRFEDTLQHYK). Disordered stretches follow at residues 291 to 320 (ASKDGSVNSTPGDKGPGIKGKASSVWAKEG) and 339 to 377 (LSSPQQGSQPSESSGGNSRGSNSPIPLTQEDTDSDGEEP). Residues 339–361 (LSSPQQGSQPSESSGGNSRGSNS) are compositionally biased toward low complexity. Coiled coils occupy residues 385–435 (QQLL…QLKQ) and 500–575 (TVQM…RGRT).

Belongs to the CFAP100 family.

Its subcellular location is the cytoplasm. The protein resides in the cytoskeleton. It is found in the cilium axoneme. Its function is as follows. May play a role in ciliary/flagellar motility by regulating the assembly and the activity of axonemal inner dynein arm. The polypeptide is Cilia- and flagella-associated protein 100 (Macaca fascicularis (Crab-eating macaque)).